Reading from the N-terminus, the 231-residue chain is uncharacterized protein (231 aa).

The first 17 residues, 1–17 (MFGKILTTSLLIAMTFA), serve as a signal peptide directing secretion. A disordered region spans residues 197 to 231 (KARKQQKNEGDDEETEDEQKIGSAIDGWVERQAKL).

This is an uncharacterized protein from Caenorhabditis elegans.